Here is a 407-residue protein sequence, read N- to C-terminus: Arginine deiminase (407 aa).

C397 serves as the catalytic Amidino-cysteine intermediate.

It belongs to the arginine deiminase family.

It is found in the cytoplasm. It catalyses the reaction L-arginine + H2O = L-citrulline + NH4(+). It functions in the pathway amino-acid degradation; L-arginine degradation via ADI pathway; carbamoyl phosphate from L-arginine: step 1/2. The sequence is that of Arginine deiminase from Salmonella arizonae (strain ATCC BAA-731 / CDC346-86 / RSK2980).